We begin with the raw amino-acid sequence, 859 residues long: Cleavage factor two protein 2 (859 aa).

A disordered region spans residues 560–611 (PDDSDNVNQNSRKRPLKDGAKTTSPVNEEDNKNEEEDGYNMSDPISKRSKHR). Positions 586-597 (NEEDNKNEEEDG) are enriched in acidic residues.

In terms of assembly, component of the cleavage and polyadenylation factor (CPF) complex, which is composed of at least PTI1, SYC1, SSU72, GLC7, MPE1, REF2, PFS2, PTA1, YSH1/BRR5, SWD2, CFT2/YDH1, YTH1, CFT1/YHH1, FIP1 and PAP1. Interacts with the CTD domain of RPB1/RNA polymerase II; the interaction is enhanced upon phosphorylation of the RPB1 CTD domain. Interacts with PCF11.

The protein localises to the nucleus. Functionally, RNA-binding component of the cleavage and polyadenylation factor (CPF) complex, which plays a key role in polyadenylation-dependent pre-mRNA 3'-end formation and cooperates with cleavage factors including the CFIA complex and NAB4/CFIB. May be involved in poly(A)-site recognition. May be involved in the association of the CPF, CPFIA and RNA polymerase II complexes. This is Cleavage factor two protein 2 (CFT2) from Saccharomyces cerevisiae (strain ATCC 204508 / S288c) (Baker's yeast).